The sequence spans 85 residues: Conotoxin Cap15b (85 aa).

The signal sequence occupies residues 1–23 (MEKLTFLILVATVLLTIHVLVQS). A propeptide spanning residues 24 to 49 (DGDKHLKRRPKQYATKRLSALMRGHR) is cleaved from the precursor. At Q50 the chain carries Pyrrolidone carboxylic acid.

This sequence belongs to the conotoxin O2 superfamily. Contains 4 disulfide bonds. In terms of tissue distribution, expressed by the venom duct.

The protein localises to the secreted. This Conus capitaneus (Captain cone) protein is Conotoxin Cap15b.